The following is a 455-amino-acid chain: UDP-N-acetylmuramoylalanine--D-glutamate ligase (455 aa).

Residue 119–125 (GTNGKTT) coordinates ATP.

This sequence belongs to the MurCDEF family.

It localises to the cytoplasm. The catalysed reaction is UDP-N-acetyl-alpha-D-muramoyl-L-alanine + D-glutamate + ATP = UDP-N-acetyl-alpha-D-muramoyl-L-alanyl-D-glutamate + ADP + phosphate + H(+). The protein operates within cell wall biogenesis; peptidoglycan biosynthesis. Functionally, cell wall formation. Catalyzes the addition of glutamate to the nucleotide precursor UDP-N-acetylmuramoyl-L-alanine (UMA). This chain is UDP-N-acetylmuramoylalanine--D-glutamate ligase, found in Listeria monocytogenes serotype 4b (strain F2365).